The primary structure comprises 250 residues: 1-(5-phosphoribosyl)-5-[(5-phosphoribosylamino)methylideneamino] imidazole-4-carboxamide isomerase (250 aa).

The Proton acceptor role is filled by D12. D133 acts as the Proton donor in catalysis.

The protein belongs to the HisA/HisF family.

The protein resides in the cytoplasm. It catalyses the reaction 1-(5-phospho-beta-D-ribosyl)-5-[(5-phospho-beta-D-ribosylamino)methylideneamino]imidazole-4-carboxamide = 5-[(5-phospho-1-deoxy-D-ribulos-1-ylimino)methylamino]-1-(5-phospho-beta-D-ribosyl)imidazole-4-carboxamide. Its pathway is amino-acid biosynthesis; L-histidine biosynthesis; L-histidine from 5-phospho-alpha-D-ribose 1-diphosphate: step 4/9. The polypeptide is 1-(5-phosphoribosyl)-5-[(5-phosphoribosylamino)methylideneamino] imidazole-4-carboxamide isomerase (Zymomonas mobilis subsp. mobilis (strain ATCC 31821 / ZM4 / CP4)).